Here is a 325-residue protein sequence, read N- to C-terminus: Beta-ketoacyl-[acyl-carrier-protein] synthase III 2 (325 aa).

Catalysis depends on residues cysteine 113 and histidine 250. Positions 251-255 (SANLR) are ACP-binding. The active site involves asparagine 280.

The protein belongs to the thiolase-like superfamily. FabH family. In terms of assembly, homodimer.

Its subcellular location is the cytoplasm. The catalysed reaction is 3-methylbutanoyl-CoA + malonyl-[ACP] + H(+) = 5-methyl-3-oxohexanoyl-[ACP] + CO2 + CoA. It carries out the reaction 2-methylpropanoyl-CoA + malonyl-[ACP] + H(+) = 4-methyl-3-oxopentanoyl-[ACP] + CO2 + CoA. The enzyme catalyses (2S)-2-methylbutanoyl-CoA + malonyl-[ACP] + H(+) = (4S)-4-methyl-3-oxohexanoyl-[ACP] + CO2 + CoA. It catalyses the reaction malonyl-[ACP] + acetyl-CoA + H(+) = 3-oxobutanoyl-[ACP] + CO2 + CoA. The catalysed reaction is malonyl-[ACP] + propanoyl-CoA + H(+) = 3-oxopentanoyl-[ACP] + CO2 + CoA. It carries out the reaction butanoyl-CoA + malonyl-[ACP] + H(+) = 3-oxohexanoyl-[ACP] + CO2 + CoA. The enzyme catalyses pentanoyl-CoA + malonyl-[ACP] + H(+) = 3-oxoheptanoyl-[ACP] + CO2 + CoA. It catalyses the reaction hexanoyl-CoA + malonyl-[ACP] + H(+) = 3-oxooctanoyl-[ACP] + CO2 + CoA. The catalysed reaction is heptanoyl-CoA + malonyl-[ACP] + H(+) = 3-oxononanoyl-[ACP] + CO2 + CoA. Its pathway is lipid metabolism; fatty acid biosynthesis. Its function is as follows. Catalyzes the condensation reaction of fatty acid synthesis by the addition to an acyl acceptor of two carbons from malonyl-ACP. Catalyzes the first condensation reaction which initiates fatty acid synthesis and may therefore play a role in governing the total rate of fatty acid production. Possesses both acetoacetyl-ACP synthase and acetyl transacylase activities. Has some substrate specificity for branched chain acyl-CoA, determining the biosynthesis of branched-chain of fatty acids instead of straight-chain. The protein is Beta-ketoacyl-[acyl-carrier-protein] synthase III 2 of Bacillus subtilis (strain 168).